Here is a 473-residue protein sequence, read N- to C-terminus: O-methyltransferase ARMGADRAFT_1088206 (473 aa).

Residues 276–277 (AG), aspartate 299, 330–331 (DM), and arginine 348 each bind S-adenosyl-L-methionine. The active-site Proton acceptor is the histidine 352.

Belongs to the class I-like SAM-binding methyltransferase superfamily. Cation-independent O-methyltransferase family.

It participates in secondary metabolite biosynthesis. Its function is as follows. O-methyltransferase, part of the gene cluster that mediates the biosynthesis of melleolides, a range of antifungal and phytotoxic polyketide derivatives composed of an orsellinic acid (OA) moiety esterified to various sesquiterpene alcohols. The first step in melleolides biosynthesis is performed by the delta(6)-protoilludene synthase PRO1 which catalyzes the cyclization of farnesyl diphosphate to protoilludene. The orsellinic acid synthase armB produces OA by condensing acetyl-CoA with 3 malonyl-CoA units in a three-round chain elongation reaction folowed by a C2-C7 ring closure. ArmB further catalyzes the trans-esterification of OA to the various sesquiterpene alcohols resulting from the hydroxylation of protoilludene. The melleolides cluster also includes 5 cytochrome P450 monooxygenases, 4 NAD(+)-dependent oxidoreductases, one flavin-dependent oxidoreductase, and one O-methyltransferase. The cytochrome P450 monooxygenases may be involved in protoilludene hydroxylation to elaborate melleolides with multiple alcohol groups, such as melleolide D, which carries alcohol functionalities at C-4, C-5, C-10, and C-13. The role of the NAD(+)-dependent enzymes remains unknown. Numerous melleolides, including arnamial, show 5'-O-methylation of the aromatic moiety which may be catalyzed by the methyltransferase encoded in the cluster. The flavin-dependent oxidoreductase might represent the dehydrogenase yielding the aldehyde in position 1 of arnamial and other melleolides. Finally, several halogenase localized outside of the cluster, are able to catalyze the transfer of a single chlorine atom to the melleolide backbone, resulting in a 6'-chloromelleolide product. The sequence is that of O-methyltransferase ARMGADRAFT_1088206 from Armillaria gallica (Bulbous honey fungus).